A 248-amino-acid polypeptide reads, in one-letter code: 2,3-bisphosphoglycerate-dependent phosphoglycerate mutase (248 aa).

Residues 8–15 (RHGESTWN), 21–22 (TG), R60, 87–90 (ERHY), K98, 114–115 (RR), and 183–184 (GN) each bind substrate. The active-site Tele-phosphohistidine intermediate is H9. E87 acts as the Proton donor/acceptor in catalysis.

This sequence belongs to the phosphoglycerate mutase family. BPG-dependent PGAM subfamily. As to quaternary structure, homodimer.

The enzyme catalyses (2R)-2-phosphoglycerate = (2R)-3-phosphoglycerate. It functions in the pathway carbohydrate degradation; glycolysis; pyruvate from D-glyceraldehyde 3-phosphate: step 3/5. In terms of biological role, catalyzes the interconversion of 2-phosphoglycerate and 3-phosphoglycerate. The sequence is that of 2,3-bisphosphoglycerate-dependent phosphoglycerate mutase from Cupriavidus pinatubonensis (strain JMP 134 / LMG 1197) (Cupriavidus necator (strain JMP 134)).